A 180-amino-acid chain; its full sequence is ATP-dependent protease subunit HslV (180 aa).

T5 is an active-site residue. Na(+) contacts are provided by G161, C164, and T167.

It belongs to the peptidase T1B family. HslV subfamily. A double ring-shaped homohexamer of HslV is capped on each side by a ring-shaped HslU homohexamer. The assembly of the HslU/HslV complex is dependent on binding of ATP.

It is found in the cytoplasm. The enzyme catalyses ATP-dependent cleavage of peptide bonds with broad specificity.. Its activity is regulated as follows. Allosterically activated by HslU binding. In terms of biological role, protease subunit of a proteasome-like degradation complex believed to be a general protein degrading machinery. This is ATP-dependent protease subunit HslV from Campylobacter lari (strain RM2100 / D67 / ATCC BAA-1060).